Here is a 70-residue protein sequence, read N- to C-terminus: MTIINSISSLGKITNKNKSQNNLNSINNSINPPNNIQGSNEKTGLVSGLLELVGGVVLILGLVVGATLGL.

The protein belongs to the UPF0519 family.

The chain is UPF0519 protein B (sigN122) from Dictyostelium discoideum (Social amoeba).